A 512-amino-acid polypeptide reads, in one-letter code: MGNSANEDKLRYACDRCHSQKLRCPRSVEPEKANPEEPCSRCRKAGVPCVVSLRGKVGRPSKATKKKSARSPRATSTPEAEFPPYDINSVLSGEVDGSIPWASPSGDRMMDMFDLASGSGSVTTSASPKTMAEDYQPEGQRPFPDPLMGPGLIQVPYEPFLMEFDTDADYPTFCIPPSLTDMPAGVEFNQPQDKTFNSSQMDSFMDVKTDASMMMPHADMDMTSPKGTGPTIDPVTVDPRMSFSAHAAQSPGDIFASDDFEAGAEFSSTASYQKLSDLNLRILQCGSTAQAGTAPQNSSQLLKDVVGFSGELIDIARQSMPHFVGCTRSSSRASTTSKGSSMESDEGDGSIDTAFSQSSWGSLKPGSASGPQATSQSVPESAVIFLLLGCYTQILHLFELTTNCLWAQHCEAGQPAPQNDDTSGTIGSLLEASIAIHTVTYLLSRLHRALAAPEMDASTDAADSHGWKKSFVGGKELEDGLLGRAFGEIREREQWLMRRTKHLQQRINKCHI.

The zn(2)-C6 fungal-type DNA-binding region spans 14–49 (CDRCHSQKLRCPRSVEPEKANPEEPCSRCRKAGVPC). Disordered stretches follow at residues 54–87 (RGKVGRPSKATKKKSARSPRATSTPEAEFPPYDI), 118–148 (GSGSVTTSASPKTMAEDYQPEGQRPFPDPLM), and 325–351 (GCTRSSSRASTTSKGSSMESDEGDGSI). Positions 56-70 (KVGRPSKATKKKSAR) are enriched in basic residues. Composition is skewed to low complexity over residues 118–127 (GSGSVTTSAS) and 327–342 (TRSSSRASTTSKGSSM).

The protein localises to the nucleus. Transcription factor that regulates the expression of the asc-1 and asc-2 gene clusters that mediate the biosynthesis of both ascochlorin and ascofuranone, a strong inhibitor of cyanide-insensitive alternative oxidases and a promising drug candidate against African trypanosomiasis. Binds the 5'-CGGYGNNTTW-3' motif within promoters of the target genes. The protein is Ascofuranone/ascochlorin biosynthesis clusters transcription regulator of Acremonium egyptiacum (Oospora egyptiaca).